The primary structure comprises 87 residues: Small ribosomal subunit protein eS21B (87 aa).

Methionine 1 is modified (N-acetylmethionine).

It belongs to the eukaryotic ribosomal protein eS21 family. Component of the small ribosomal subunit (SSU). Mature yeast ribosomes consist of a small (40S) and a large (60S) subunit. The 40S small subunit contains 1 molecule of ribosomal RNA (18S rRNA) and 33 different proteins (encoded by 57 genes). The large 60S subunit contains 3 rRNA molecules (25S, 5.8S and 5S rRNA) and 46 different proteins (encoded by 81 genes). N-terminally acetylated by acetyltransferase NatB.

The protein localises to the cytoplasm. Functionally, component of the ribosome, a large ribonucleoprotein complex responsible for the synthesis of proteins in the cell. The small ribosomal subunit (SSU) binds messenger RNAs (mRNAs) and translates the encoded message by selecting cognate aminoacyl-transfer RNA (tRNA) molecules. The large subunit (LSU) contains the ribosomal catalytic site termed the peptidyl transferase center (PTC), which catalyzes the formation of peptide bonds, thereby polymerizing the amino acids delivered by tRNAs into a polypeptide chain. The nascent polypeptides leave the ribosome through a tunnel in the LSU and interact with protein factors that function in enzymatic processing, targeting, and the membrane insertion of nascent chains at the exit of the ribosomal tunnel. eS21 is required for the processing of the 20S rRNA-precursor to mature 18S rRNA in a late step of the maturation of 40S ribosomal subunits. Has a physiological role leading to 18S rRNA stability. The chain is Small ribosomal subunit protein eS21B from Saccharomyces cerevisiae (strain ATCC 204508 / S288c) (Baker's yeast).